A 191-amino-acid polypeptide reads, in one-letter code: Insulin-like peptide INSL6 (191 aa).

Positions 1-22 (MKQLCCSCLLWLGLLLTPFSRE) are cleaved as a signal peptide. Cystine bridges form between cysteine 33–cysteine 172, cysteine 45–cysteine 185, and cysteine 171–cysteine 176. Positions 53 to 161 (FEMEEQSPMT…RSLFWGNHSQ (109 aa)) are cleaved as a propeptide — connecting peptide.

Belongs to the insulin family.

It localises to the secreted. May have a role in sperm development and fertilization. The protein is Insulin-like peptide INSL6 (Insl6) of Mus musculus (Mouse).